The sequence spans 421 residues: Testin (421 aa).

Positions 92 to 199 (MILTNPVAAK…GDVKLPCEMD (108 aa)) constitute a PET domain. The disordered stretch occupies residues 133–164 (EKQPVAGSEGAQYRKKQLAKQLPAHDQDPSKC). Positions 155–164 (PAHDQDPSKC) are enriched in basic and acidic residues. LIM zinc-binding domains are found at residues 234 to 297 (YSCY…CDSE), 299 to 359 (PRCA…NHAV), and 362 to 421 (QGCH…KMMS).

This sequence belongs to the prickle / espinas / testin family. In terms of assembly, interacts via LIM domain 1 with ZYX. Interacts (via LIM domain 3) with ENAH and VASP. Interacts with ALKBH4, talin, actin, alpha-actinin, GRIP1 and PXN. Interacts (via LIM domain 2) with ACTL7A (via N-terminus). Heterodimer with ACTL7A; the heterodimer interacts with ENAH to form a heterotrimer.

Its subcellular location is the cytoplasm. The protein localises to the cell junction. It localises to the focal adhesion. Its function is as follows. Scaffold protein that may play a role in cell adhesion, cell spreading and in the reorganization of the actin cytoskeleton. Plays a role in the regulation of cell proliferation. May act as a tumor suppressor. This is Testin (TES) from Callithrix jacchus (White-tufted-ear marmoset).